The primary structure comprises 333 residues: Acetoin:2,6-dichlorophenolindophenol oxidoreductase subunit alpha (333 aa).

In terms of assembly, tetramer of 2 alpha and 2 beta subunits. Thiamine diphosphate serves as cofactor.

It participates in ketone degradation; acetoin degradation. Its function is as follows. Catalyzes the 2,6-dichlorophenolindophenol-dependent cleavage of acetoin into acetate and acetaldehyde, in vitro. The alpha subunit is probably the catalytic subunit of the enzyme. This is Acetoin:2,6-dichlorophenolindophenol oxidoreductase subunit alpha (acoA) from Cupriavidus necator (strain ATCC 17699 / DSM 428 / KCTC 22496 / NCIMB 10442 / H16 / Stanier 337) (Ralstonia eutropha).